Reading from the N-terminus, the 439-residue chain is Lipid-A-disaccharide synthase (439 aa).

The disordered stretch occupies residues Met-1–Leu-35.

Belongs to the LpxB family.

It catalyses the reaction a lipid X + a UDP-2-N,3-O-bis[(3R)-3-hydroxyacyl]-alpha-D-glucosamine = a lipid A disaccharide + UDP + H(+). It functions in the pathway bacterial outer membrane biogenesis; LPS lipid A biosynthesis. In terms of biological role, condensation of UDP-2,3-diacylglucosamine and 2,3-diacylglucosamine-1-phosphate to form lipid A disaccharide, a precursor of lipid A, a phosphorylated glycolipid that anchors the lipopolysaccharide to the outer membrane of the cell. The protein is Lipid-A-disaccharide synthase of Xanthomonas euvesicatoria pv. vesicatoria (strain 85-10) (Xanthomonas campestris pv. vesicatoria).